The following is a 195-amino-acid chain: Nucleoside triphosphate pyrophosphatase (195 aa).

Residue Asp76 is the Proton acceptor of the active site.

The protein belongs to the Maf family. It depends on a divalent metal cation as a cofactor.

The protein localises to the cytoplasm. The enzyme catalyses a ribonucleoside 5'-triphosphate + H2O = a ribonucleoside 5'-phosphate + diphosphate + H(+). It catalyses the reaction a 2'-deoxyribonucleoside 5'-triphosphate + H2O = a 2'-deoxyribonucleoside 5'-phosphate + diphosphate + H(+). Its function is as follows. Nucleoside triphosphate pyrophosphatase. May have a dual role in cell division arrest and in preventing the incorporation of modified nucleotides into cellular nucleic acids. The protein is Nucleoside triphosphate pyrophosphatase of Pelagibacter ubique (strain HTCC1062).